A 121-amino-acid polypeptide reads, in one-letter code: uncharacterized protein (121 aa).

2 disordered regions span residues 1 to 28 (MGCA…QNGD) and 60 to 81 (QENL…EIPG). Phosphoserine is present on residues S95 and S115.

This is an uncharacterized protein from Mus musculus (Mouse).